Reading from the N-terminus, the 72-residue chain is MRESRLSQYKQNKLIEIFLASVTALATAKLVNINKLQLITFIVYHCLSLKAAYIWKCLKVKFKRMKAILVVL.

This is an uncharacterized protein from Haemophilus influenzae (strain ATCC 51907 / DSM 11121 / KW20 / Rd).